Here is a 164-residue protein sequence, read N- to C-terminus: uncharacterized protein (164 aa).

A compositionally biased stretch (polar residues) spans 1 to 17; the sequence is MNSRVPATQSWFSSHLP. The disordered stretch occupies residues 1 to 48; that stretch reads MNSRVPATQSWFSSHLPTTEPDLEPATAAEGSTTETATLSPETTSFND. Positions 24–45 are enriched in low complexity; the sequence is EPATAAEGSTTETATLSPETTS. The chain crosses the membrane as a helical span at residues 64–84; that stretch reads MLLSFGIITVIGLAVAMVLYI. Residues 106–130 adopt a coiled-coil conformation; sequence TEEQDELEQELLEHGRDAASMQAAA.

The protein resides in the membrane. This is an uncharacterized protein from Mus musculus (Mouse).